An 808-amino-acid polypeptide reads, in one-letter code: Transcription activator of gluconeogenesis PAAG_01030 (808 aa).

The interval 1–90 (MTSSVRNGSP…SAKDPLRPRR (90 aa)) is disordered. The segment covering 69–83 (STSSTAASANNASAK) has biased composition (low complexity). Residues 97–125 (CFACQRAHLTCGDERPCQRCIKRGLQDTC) constitute a DNA-binding region (zn(2)-C6 fungal-type). Polar residues predominate over residues 158–170 (AARNKVNSNSQQR). 5 disordered regions span residues 158–203 (AARN…FSTP), 236–285 (SAFQ…YGST), 322–387 (GAGD…IYNQ), 442–461 (PPTN…STPS), and 598–629 (TGGS…DNQS). The segment covering 171 to 188 (NGTNSNSDNNSTNTNSNN) has biased composition (low complexity). 4 stretches are compositionally biased toward polar residues: residues 189–203 (KPSH…FSTP), 248–279 (FDLS…SQNP), 339–359 (GRSS…NQSP), and 377–387 (GPTNPRNIYNQ). Composition is skewed to low complexity over residues 442–451 (PPTNTQHQQQ) and 598–619 (TGGS…SRNS). A compositionally biased stretch (polar residues) spans 620-629 (ATTTVMDNQS).

Belongs to the ERT1/acuK family.

Its subcellular location is the nucleus. Functionally, transcription factor which regulates nonfermentable carbon utilization. Activator of gluconeogenetic genes. This is Transcription activator of gluconeogenesis PAAG_01030 from Paracoccidioides lutzii (strain ATCC MYA-826 / Pb01) (Paracoccidioides brasiliensis).